We begin with the raw amino-acid sequence, 1440 residues long: MQTLKTARLTSNPASIPTSSSSSAISAAAIQKTLDAVNRPPAVRASGILRHRTLPAPTQETAHHLDADPKTTELMARFFISQGIPFECAHEPAFLELMKHVDPNCVIPPTNVTKKLVDKISTSSKPQVNYTKTVGPLSVTIDICGDEDEKYLAFSIHYFEDLYERKNAIYLRKLLLTELDSNSLLTNIRRSVNSYSFSNVKFTNIVCPNEEICKLVEESAVVKRYNVCFYNYVTRFVADLMEIEEFSSGLTQLRTFVRYMKQNSDMYSKFRRMQLQKNAELDIPSIDSGDWHSTAIFLTRCLVWHDTFTEFCGKLDILHYIDNETFNHLIYLQRLLQQCMKHCRELSIPNNSISQVVPAIMSIRNFIASNSMGYRFQKRIRDSFTTSFKEITSGPSQDRYDIATLLDPRFAYRDTVYTAQTWRSLEKKVIDDFVNSDLQNDKNFYQDISILNQEQRYDIIKKEFAYYRQTSFVERPEENENSNHWWGMRQTDMEFLAVIAREYLASPAVSIDAGYYFGNGGKFQHICHTYSHQRLENCLALAGNYQTFRGKGASVDVISQSMIETLNNTASRLQKQVHLGLYAHGVDNISSDRDVQSIVGHHYPPMPTVANYDIPHVPKEEEKPPVANLQSTSSPATSSPTIIRPRAAPPPRTLAQGRPIPLNGKELKAVPIRQIPLQVRPLPPRPANVPIVPRPTVPQQFIKAPAPKPITLQAVVCSIPEKEIKKETEDVALLEKIKDEPLDEDDFNHPSTDPVPNRTTASSQGPSSYPRKIVVLASKLPTSQSSSPSTATSAQARSHVTTAQLIRCGPSEGTVPQKIHSHNFVQKFAQKQNFVHKYALNSQDHTGRLNQTVPMRAALRLPNSEQKSGAPSSINGKVQRDDFKLEPLDDFNGEPDYDNLIGAQRLMYSDNLNDASAEDAFARHRVTMEFQKRRACNRRCAVCGHLEIHERLKNVTIENEKLLIMLGCIYRGEFTLGQAQLFMARESKTYICRLHFLETLDEIYQMLRLKSADDILICPLDLIQNALITVSALRPHIIASQLRKILHDFAERNNHLRETPAELKKLGQQYFDYREPEPEPERNDVDEQEIIPKLFRQPRKQVLEADQHDGTVKVIEQEDFKLPTVKPSENEECDNPGVCCFCSKRGDRGGMLRVPRSEERLARWVDKLGPEFEARLHTNTENLICRSHFPDAAFSSRGRLLKGMIPDAAPEKVETTYIIQGNNFLKLKERKSGTDKNSAIDLANMLNPDGVEYTQEEEEEEEYEEMSRSPTEETSDDEPSQAAVYNNAPVIKRTYRKRELSNEDGPLNLVTPPAHTPNPRGRPRKYPKNSVTPEAEKSLTDYDYNPGTSQRRALKKGYVQLEDGEIVGEDCEYVPEKTPSGRLIRQAVARRSFAFADEEEEEEEYEESPIVKKPKIAGRPVGRPRKDANKLPTPTPPSNE.

4 disordered regions span residues 1–22 (MQTL…SSSS), 48–67 (ILRH…HLDA), 618–660 (PKEE…GRPI), and 738–769 (KDEP…PSSY). The span at 10-22 (TSNPASIPTSSSS) shows a compositional bias: low complexity. The span at 631 to 646 (STSSPATSSPTIIRPR) shows a compositional bias: low complexity. Positions 757 to 767 (NRTTASSQGPS) are enriched in polar residues. The THAP-type zinc finger occupies 1135-1209 (NPGVCCFCSK…LLKGMIPDAA (75 aa)). Disordered regions lie at residues 1239 to 1281 (AIDL…EPSQ), 1298 to 1350 (RELS…GTSQ), and 1395 to 1440 (FADE…PSNE). Residues 1254-1264 (TQEEEEEEEYE) are compositionally biased toward acidic residues. The segment at residues 1317–1329 (PNPRGRPRKYPKN) is a DNA-binding region (a.T hook 1). Over residues 1396–1407 (ADEEEEEEEYEE) the composition is skewed to acidic residues. Residues 1418–1430 (GRPVGRPRKDANK) constitute a DNA-binding region (a.T hook 2).

Its function is as follows. Synthetic multivulva (synMuv) class B protein. SynMuv proteins are required to repress the induction of vulval development. Acts redundantly with SynMuv class A protein lin-15A to negatively regulate vulval development. Regulates let-23 basal activity. This chain is Protein lin-15B, found in Caenorhabditis elegans.